The primary structure comprises 99 residues: Plastocyanin (99 aa).

The Plastocyanin-like domain occupies 1–99; sequence AEVLLGSSDG…AGMVGKVTVN (99 aa). Cu cation contacts are provided by histidine 37, cysteine 84, histidine 87, and methionine 92.

The protein belongs to the plastocyanin family. It depends on Cu(2+) as a cofactor.

It is found in the plastid. The protein localises to the chloroplast thylakoid membrane. In terms of biological role, participates in electron transfer between P700 and the cytochrome b6-f complex in photosystem I. The sequence is that of Plastocyanin (PETE) from Lactuca sativa (Garden lettuce).